We begin with the raw amino-acid sequence, 404 residues long: Keratin, type I cuticular Ha3-I (404 aa).

Residues 1–56 (MPYNCCLPAMSCRTSCSSRPCVPPSCHGCTLPGACNIPANVGNCNWFCEGSFNGNE) are head. The IF rod domain maps to 56 to 367 (EKETMQFLND…GLLESEDCKL (312 aa)). The tract at residues 57-91 (KETMQFLNDRLASYMEKVRQLERENAELECRIQER) is coil 1A. The tract at residues 92–102 (NQQQDPLVCPA) is linker 1. Residues 103 to 203 (YQAYFRTIEE…HEQEVNTLRC (101 aa)) are coil 1B. Positions 204-219 (QLGDRLNVEVDAAPTV) are linker 12. A coil 2 region spans residues 220 to 363 (DLNRVLNETR…NTYRGLLESE (144 aa)). The segment at 364–404 (DCKLPCNPCATTNACDKPIGPCVPNPCVTRPRCGPCNTFVR) is tail.

It belongs to the intermediate filament family.

This is Keratin, type I cuticular Ha3-I from Mus musculus (Mouse).